The following is a 179-amino-acid chain: Large ribosomal subunit protein uL5 (179 aa).

The protein belongs to the universal ribosomal protein uL5 family. As to quaternary structure, part of the 50S ribosomal subunit; part of the 5S rRNA/L5/L18/L25 subcomplex. Contacts the 5S rRNA and the P site tRNA. Forms a bridge to the 30S subunit in the 70S ribosome.

Functionally, this is one of the proteins that bind and probably mediate the attachment of the 5S RNA into the large ribosomal subunit, where it forms part of the central protuberance. In the 70S ribosome it contacts protein S13 of the 30S subunit (bridge B1b), connecting the 2 subunits; this bridge is implicated in subunit movement. Contacts the P site tRNA; the 5S rRNA and some of its associated proteins might help stabilize positioning of ribosome-bound tRNAs. This chain is Large ribosomal subunit protein uL5, found in Desulfovibrio desulfuricans (strain ATCC 27774 / DSM 6949 / MB).